Consider the following 146-residue polypeptide: Hemoglobin A/D subunit beta (146 aa).

Residues 2-146 (HWTSEEKQYI…VAHALALGYH (145 aa)) enclose the Globin domain. Residues H63 and H92 each contribute to the heme b site.

The protein belongs to the globin family. Hemoglobins A and D are heterotetramers of alpha-1, alpha-2 and two identical beta chains. Red blood cells.

Its function is as follows. Involved in oxygen transport from the lung to the various peripheral tissues. The chain is Hemoglobin A/D subunit beta from Aldabrachelys gigantea (Aldabra giant tortoise).